The sequence spans 116 residues: CDKN2AIP N-terminal-like protein (116 aa).

The residue at position 1 (Met-1) is an N-acetylmethionine. An XRN2-binding (XTBD) domain is found at 24–116; the sequence is AEQFRSYSES…RSELMKKHQS (93 aa).

This sequence belongs to the CARF family. As to quaternary structure, interacts with XRN2; the interaction is direct.

This is CDKN2AIP N-terminal-like protein (CDKN2AIPNL) from Bos taurus (Bovine).